We begin with the raw amino-acid sequence, 437 residues long: Argininosuccinate lyase (437 aa).

This sequence belongs to the lyase 1 family. Argininosuccinate lyase subfamily.

The protein resides in the cytoplasm. The enzyme catalyses 2-(N(omega)-L-arginino)succinate = fumarate + L-arginine. It functions in the pathway amino-acid biosynthesis; L-arginine biosynthesis; L-arginine from L-ornithine and carbamoyl phosphate: step 3/3. The chain is Argininosuccinate lyase from Clostridium novyi (strain NT).